Here is a 595-residue protein sequence, read N- to C-terminus: Arginine--tRNA ligase (595 aa).

The 'HIGH' region motif lies at 132 to 142; sequence ANPTGPLHVGH.

Belongs to the class-I aminoacyl-tRNA synthetase family. In terms of assembly, monomer.

It is found in the cytoplasm. The enzyme catalyses tRNA(Arg) + L-arginine + ATP = L-arginyl-tRNA(Arg) + AMP + diphosphate. This is Arginine--tRNA ligase from Cupriavidus taiwanensis (strain DSM 17343 / BCRC 17206 / CCUG 44338 / CIP 107171 / LMG 19424 / R1) (Ralstonia taiwanensis (strain LMG 19424)).